Reading from the N-terminus, the 773-residue chain is Cytochrome c oxidase subunit 1+2 (773 aa).

The interval 1–491 (MKLLEIYDKQ…LIASYGSLIT (491 aa)) is COX1. Residues 41 to 61 (TMYITFSIFAGIIGTLLSLVI) form a helical membrane-spanning segment. Glutamate 64 contributes to the Ca(2+) binding site. Histidine 85 is a binding site for Fe(II)-heme a. 6 helical membrane-spanning segments follow: residues 87 to 111 (LIMI…NWFL), 130 to 150 (LWLI…GIGA), 173 to 193 (VGIL…INFL), 211 to 231 (LFVW…PVLA), 262 to 278 (LFHP…FGII), and 290 to 310 (IFGV…GFLV). Histidine 264 contributes to the Cu cation binding site. The 1'-histidyl-3'-tyrosine (His-Tyr) cross-link spans 264–268 (HPEVY). Residue tyrosine 268 participates in O2 binding. Residues histidine 314 and histidine 315 each contribute to the Cu cation site. A run of 2 helical transmembrane segments spans residues 335 to 355 (IIAI…WGGV) and 362 to 382 (MLFV…GVVL). Histidine 392 and aspartate 393 together coordinate Mg(2+). 5 helical membrane-spanning segments follow: residues 396 to 416 (YVVA…IFAG), 444 to 464 (FWTM…LGLA), 483 to 503 (IASY…VNIF), 555 to 575 (IFFY…RILW), and 604 to 624 (GTVI…LIAI). Histidine 400 is a binding site for heme a3. Histidine 402 provides a ligand contact to Fe(II)-heme a. The COX2 stretch occupies residues 492-773 (AFGLLFFFVN…VQEYLGRLYK (282 aa)). Residues histidine 709, cysteine 744, cysteine 748, and histidine 752 each contribute to the Cu cation site.

This sequence in the N-terminal section; belongs to the heme-copper respiratory oxidase family. In the C-terminal section; belongs to the cytochrome c oxidase subunit 2 family. In terms of assembly, component of the cytochrome c oxidase (complex IV, CIV), a multisubunit enzyme composed of a catalytic core of 3 subunits and several supernumerary subunits. The complex exists as a monomer or a dimer and forms supercomplexes (SCs) in the inner mitochondrial membrane with ubiquinol-cytochrome c oxidoreductase (cytochrome b-c1 complex, complex III, CIII). Heme is required as a cofactor. It depends on Cu cation as a cofactor.

It is found in the mitochondrion inner membrane. The enzyme catalyses 4 Fe(II)-[cytochrome c] + O2 + 8 H(+)(in) = 4 Fe(III)-[cytochrome c] + 2 H2O + 4 H(+)(out). The protein operates within energy metabolism; oxidative phosphorylation. Component of the cytochrome c oxidase, the last enzyme in the mitochondrial electron transport chain which drives oxidative phosphorylation. The respiratory chain contains 3 multisubunit complexes succinate dehydrogenase (complex II, CII), ubiquinol-cytochrome c oxidoreductase (cytochrome b-c1 complex, complex III, CIII) and cytochrome c oxidase (complex IV, CIV), that cooperate to transfer electrons derived from NADH and succinate to molecular oxygen, creating an electrochemical gradient over the inner membrane that drives transmembrane transport and the ATP synthase. Cytochrome c oxidase is the component of the respiratory chain that catalyzes the reduction of oxygen to water. Electrons originating from reduced cytochrome c in the intermembrane space (IMS) are transferred via the dinuclear copper A center (CU(A)) of subunit 2 and heme A of subunit 1 to the active site in subunit 1, a binuclear center (BNC) formed by heme A3 and copper B (CU(B)). The BNC reduces molecular oxygen to 2 water molecules using 4 electrons from cytochrome c in the IMS and 4 protons from the mitochondrial matrix. The polypeptide is Cytochrome c oxidase subunit 1+2 (cox1/2) (Dictyostelium citrinum (Slime mold)).